Consider the following 324-residue polypeptide: Putative arsenical pump-driving ATPase (324 aa).

Residue 21–28 coordinates ATP; sequence GKGGVGKT.

This sequence belongs to the arsA ATPase family.

It catalyses the reaction arsenite(in) + ATP + H2O = arsenite(out) + ADP + phosphate + H(+). Its function is as follows. Anion-transporting ATPase. Catalyzes the extrusion of arsenite. This chain is Putative arsenical pump-driving ATPase, found in Methanothermobacter thermautotrophicus (strain ATCC 29096 / DSM 1053 / JCM 10044 / NBRC 100330 / Delta H) (Methanobacterium thermoautotrophicum).